The sequence spans 725 residues: Methionine--tRNA ligase (725 aa).

The 'HIGH' region signature appears at 27–37 (PYANGQIHIGH). The Zn(2+) site is built by cysteine 158, cysteine 161, cysteine 171, and cysteine 174. Positions 348–352 (KMSKS) match the 'KMSKS' region motif. ATP is bound at residue lysine 351. The 107-residue stretch at 619–725 (DFAKIDLRIA…SGAKPGMRVK (107 aa)) folds into the tRNA-binding domain.

This sequence belongs to the class-I aminoacyl-tRNA synthetase family. MetG type 1 subfamily. Homodimer. It depends on Zn(2+) as a cofactor.

The protein localises to the cytoplasm. It carries out the reaction tRNA(Met) + L-methionine + ATP = L-methionyl-tRNA(Met) + AMP + diphosphate. Is required not only for elongation of protein synthesis but also for the initiation of all mRNA translation through initiator tRNA(fMet) aminoacylation. The protein is Methionine--tRNA ligase of Burkholderia pseudomallei (strain 1106a).